We begin with the raw amino-acid sequence, 133 residues long: Small ribosomal subunit protein uS9 (133 aa).

The segment covering 102 to 113 (KVEGYLSRDPRA) has biased composition (basic and acidic residues). A disordered region spans residues 102–133 (KVEGYLSRDPRAKERRKYGLKKARKAPQFSKR). Residues 114–133 (KERRKYGLKKARKAPQFSKR) are compositionally biased toward basic residues.

It belongs to the universal ribosomal protein uS9 family.

This Gloeobacter violaceus (strain ATCC 29082 / PCC 7421) protein is Small ribosomal subunit protein uS9.